The following is an 860-amino-acid chain: Tetratricopeptide repeat protein 13 (860 aa).

TPR repeat units lie at residues 143 to 176 (TNEELAIAYVLIGSGLYDEAIRHFSTMLQEEPDL), 216 to 248 (PEVFEQRAEILSPLGRINEAVNDLTKAIQLQPS), 249 to 282 (ARLYRHRGTLYFISEDYATAHEDFQQSLELNKNQ), 284 to 316 (IAMLYKGLTFFHRGLLKEAIESFKEALKQKVDF), 317 to 350 (IDAYKSLGQAYRELGNFEAATESFQKALLLNQNH), 352 to 384 (QTLQLRGMMLYHHGSLQEALKNFKRCLQLEPYN), and 386 to 418 (VCQYMKGLSHVAMGQFYEGIKAQTKVMLNDPLP).

This chain is Tetratricopeptide repeat protein 13 (TTC13), found in Homo sapiens (Human).